Consider the following 550-residue polypeptide: Metal transporter Nramp4 (550 aa).

Over residues 1–13 (MEEGAKIGREHEQ) the composition is skewed to basic and acidic residues. The segment at 1–37 (MEEGAKIGREHEQQQQQHGRVNGSGRVAAVGGGSGGG) is disordered. A compositionally biased stretch (low complexity) spans 14–29 (QQQQHGRVNGSGRVAA). 12 helical membrane-spanning segments follow: residues 72–92 (FLAH…PSNL), 105–125 (SLLW…SLAA), 151–171 (LWLL…LGTA), 177–197 (LLHI…FLIL), 207–227 (MEFT…MELG), 255–275 (VAMF…SLVL), 292–312 (FFLL…VAIV), 354–374 (VYGV…SYAG), 388–408 (IIYL…CSIG), 416–436 (IINI…IPLI), 457–477 (IAWI…CTSF), and 492–512 (AIIS…LIYL).

Belongs to the NRAMP (TC 2.A.55) family.

Its subcellular location is the membrane. Functionally, probable metal transporter. In Oryza sativa subsp. japonica (Rice), this protein is Metal transporter Nramp4 (NRAMP4).